The chain runs to 243 residues: Uridylate kinase (243 aa).

18-21 (KLGG) is a binding site for ATP. Residue Gly-59 participates in UMP binding. Residues Gly-60 and Arg-64 each contribute to the ATP site. UMP is bound by residues Asp-79 and 140–147 (MGMPYFST). Positions 173 and 176 each coordinate ATP.

The protein belongs to the UMP kinase family. In terms of assembly, homohexamer.

The protein localises to the cytoplasm. The enzyme catalyses UMP + ATP = UDP + ADP. The protein operates within pyrimidine metabolism; CTP biosynthesis via de novo pathway; UDP from UMP (UMPK route): step 1/1. With respect to regulation, inhibited by UTP. Catalyzes the reversible phosphorylation of UMP to UDP. The protein is Uridylate kinase of Corynebacterium glutamicum (strain R).